The primary structure comprises 148 residues: Nucleoside diphosphate kinase A (148 aa).

Residues lysine 9, phenylalanine 57, arginine 85, threonine 91, arginine 102, and asparagine 112 each coordinate ATP. Histidine 115 acts as the Pros-phosphohistidine intermediate in catalysis.

It belongs to the NDK family. Mg(2+) is required as a cofactor.

The enzyme catalyses a 2'-deoxyribonucleoside 5'-diphosphate + ATP = a 2'-deoxyribonucleoside 5'-triphosphate + ADP. It catalyses the reaction a ribonucleoside 5'-diphosphate + ATP = a ribonucleoside 5'-triphosphate + ADP. Its function is as follows. Major role in the synthesis of nucleoside triphosphates other than ATP. The ATP gamma phosphate is transferred to the NDP beta phosphate via a ping-pong mechanism, using a phosphorylated active-site intermediate. The polypeptide is Nucleoside diphosphate kinase A (Flaveria bidentis (Coastal plain yellowtops)).